Consider the following 710-residue polypeptide: MVMACRVVNKRRHMGLQQLSSFAETGRTFLGPLKSSKFIIDEECHESVLISSTVRLLESLDLTSAVGQLLNEAVQAQNNTYRTGISTLLFLVGAWSSAVEECLHLGVPISIIVSVMSEGLNFCSEEVVSLHVPVHNIFDCMDSTKTFSQLETFSVSLCPFLQVPSDTDLIEELHGLKDVASQTLTISNLSGRPLKSYELFKPQTKVEADNNTSRTLKNSLLADTCCRQSILIHSRHFNRTDNTEGVSKPDGFQEHVTATHKTYRCNDLVELAVGLSHGDHSSMKLVEEAVQLQYQNACVQQGNCTKPFMFDISRIFTCCLPGLPETSSCVCPGYITVVSVSNNPVIKELQNQPVRIVLIEGDLTENYRHLGFNKSANIKTVLDSMRLQEDSSEELWANHVLQVLIQFKVNLVLVQGNVSERLIEKCINSKRLVIGSVNGSVMQAFAEAAGAVQVAYITQVNEDCVGDGVCVTFWRSSPLDVVDRNNRIAILLKTEGINLVTAVLTNPVTAQMQIKEDRFWTCAYRLYYALKEEKVFLGGGAVEFLCLSCLHILAEQSLKKENHACSGWLHNTSSWLASSLAIYRPTVLKFLANGWQKYLSTLLYNTANYSSEFEASTYIQHHLQNATDSGSPSSYILNEYSKLNSRIFNSDISNKLEQIPRVYDVVTPKIEAWRRALDLVLLVLQTDSEIITGHGHTQINSQELTGFLFL.

This sequence belongs to the TCP-1 chaperonin family. BBS12 subfamily. As to quaternary structure, component of the chaperonin-containing T-complex (TRiC), a heterooligomeric complex of about 850 to 900 kDa that forms two stacked rings, 12 to 16 nm in diameter. Interacts with MKKS.

Its subcellular location is the cell projection. The protein resides in the cilium. Functionally, component of the chaperonin-containing T-complex (TRiC), a molecular chaperone complex that assists the folding of proteins upon ATP hydrolysis. As part of the TRiC complex may play a role in the assembly of BBSome, a complex involved in ciliogenesis regulating transports vesicles to the cilia. Involved in adipogenic differentiation. This is Chaperonin-containing T-complex member BBS12 (BBS12) from Homo sapiens (Human).